A 118-amino-acid polypeptide reads, in one-letter code: Fluoride-specific ion channel FluC 2 (118 aa).

The next 4 membrane-spanning stretches (helical) occupy residues 1–21 (MIEALLVATGGFFGAITRFAI), 33–53 (FPIATFLINITGAFLLGYIIG), 55–75 (GVTTGWQLLLGTGFMGAFTTF), and 93–113 (TFLLYLSATYIVGILFAFLGM). Na(+) is bound by residues Gly70 and Thr73.

The protein belongs to the fluoride channel Fluc/FEX (TC 1.A.43) family.

The protein resides in the cell membrane. The enzyme catalyses fluoride(in) = fluoride(out). Na(+) is not transported, but it plays an essential structural role and its presence is essential for fluoride channel function. Fluoride-specific ion channel. Important for reducing fluoride concentration in the cell, thus reducing its toxicity. The chain is Fluoride-specific ion channel FluC 2 from Bacillus cereus (strain ZK / E33L).